A 518-amino-acid polypeptide reads, in one-letter code: Nuclear receptor ROR-gamma (518 aa).

Positions 1-30 are modulating; it reads MDRAPQRQHRASRELLAAKKTHTSQIEVIP. NR C4-type zinc fingers lie at residues 31–51 and 67–91; these read CKICGDKSSGIHYGVITCEGC and CTRQQNCPIDRTSRNRCQHCRLQKC. The nuclear receptor DNA-binding region spans 31-96; that stretch reads CKICGDKSSG…RLQKCLALGM (66 aa). 2 disordered regions span residues 105 to 183 and 238 to 258; these read RMSK…SGSG and HPGLGELGQGPDSYGSPSFRS. A compositionally biased stretch (basic and acidic residues) spans 109–118; that stretch reads KQRDSLHAEV. Positions 119-130 are enriched in low complexity; it reads QKQLQQRQQQQQ. In terms of domain architecture, NR LBD spans 269 to 508; sequence EIEHLVQSVC…PPLYKELFST (240 aa). The AF-2 signature appears at 501–506; that stretch reads LYKELF.

It belongs to the nuclear hormone receptor family. NR1 subfamily. As to quaternary structure, interacts (via AF-2 motif) with the coactivator NCOA2 (via LXXLL motif). Interacts with the corepressor NCOR1. Interacts with CRY1. Interacts (via AF-2 motif) with the coactivators NCOA1 and PPARGC1A (via LXXLL motif). Interacts (via AF-2 motif) with PROX1. Interacts with FOXP3. Interacts with NR0B2. Isoform 1 is widely expressed in many tissues, including liver and adipose, and highly expressed in skeletal muscle. Isoform 2 is primarily expressed in immature thymocytes.

The protein localises to the nucleus. Functionally, nuclear receptor that binds DNA as a monomer to ROR response elements (RORE) containing a single core motif half-site 5'-AGGTCA-3' preceded by a short A-T-rich sequence. Key regulator of cellular differentiation, immunity, peripheral circadian rhythm as well as lipid, steroid, xenobiotics and glucose metabolism. Considered to have intrinsic transcriptional activity, have some natural ligands like oxysterols that act as agonists (25-hydroxycholesterol) or inverse agonists (7-oxygenated sterols), enhancing or repressing the transcriptional activity, respectively. Recruits distinct combinations of cofactors to target gene regulatory regions to modulate their transcriptional expression, depending on the tissue, time and promoter contexts. Regulates the circadian expression of clock genes such as CRY1, BMAL1 and NR1D1 in peripheral tissues and in a tissue-selective manner. Competes with NR1D1 for binding to their shared DNA response element on some clock genes such as BMAL1, CRY1 and NR1D1 itself, resulting in NR1D1-mediated repression or RORC-mediated activation of the expression, leading to the circadian pattern of clock genes expression. Therefore influences the period length and stability of the clock. Involved in the regulation of the rhythmic expression of genes involved in glucose and lipid metabolism, including PLIN2 and AVPR1A. Negative regulator of adipocyte differentiation through the regulation of early phase genes expression, such as MMP3. Controls adipogenesis as well as adipocyte size and modulates insulin sensitivity in obesity. In liver, has specific and redundant functions with RORA as positive or negative modulator of expression of genes encoding phase I and Phase II proteins involved in the metabolism of lipids, steroids and xenobiotics, such as SULT1E1. Also plays a role in the regulation of hepatocyte glucose metabolism through the regulation of G6PC1 and PCK1. Regulates the rhythmic expression of PROX1 and promotes its nuclear localization. Plays an indispensable role in the induction of IFN-gamma dependent anti-mycobacterial systemic immunity. Essential for thymopoiesis and the development of several secondary lymphoid tissues, including lymph nodes and Peyer's patches. Required for the generation of LTi (lymphoid tissue inducer) cells. Regulates thymocyte survival through DNA-binding on ROREs of target gene promoter regions and recruitment of coactivaros via the AF-2. Also plays a key role, downstream of IL6 and TGFB and synergistically with RORA, for lineage specification of uncommitted CD4(+) T-helper (T(H)) cells into T(H)17 cells, antagonizing the T(H)1 program. Probably regulates IL17 and IL17F expression on T(H) by binding to the essential enhancer conserved non-coding sequence 2 (CNS2) in the IL17-IL17F locus. May also play a role in the pre-TCR activation cascade leading to the maturation of alpha/beta T-cells and may participate in the regulation of DNA accessibility in the TCR-J(alpha) locus. The chain is Nuclear receptor ROR-gamma (RORC) from Homo sapiens (Human).